A 130-amino-acid chain; its full sequence is Small ribosomal subunit protein uS8 (130 aa).

Belongs to the universal ribosomal protein uS8 family. In terms of assembly, part of the 30S ribosomal subunit. Contacts proteins S5 and S12.

In terms of biological role, one of the primary rRNA binding proteins, it binds directly to 16S rRNA central domain where it helps coordinate assembly of the platform of the 30S subunit. The protein is Small ribosomal subunit protein uS8 of Haemophilus ducreyi (strain 35000HP / ATCC 700724).